A 334-amino-acid chain; its full sequence is Sterol 4-C-methyltransferase strm-1 (334 aa).

This sequence belongs to the class I-like SAM-binding methyltransferase superfamily. Erg6/SMT family. Expressed in the pharynx and hypodermal syncytium.

The catalysed reaction is 5alpha-cholest-7-en-3-one + S-adenosyl-L-methionine = 4alpha-methyl-5alpha-cholest-7-en-3-one + S-adenosyl-L-homocysteine + H(+). The protein operates within steroid hormone biosynthesis; dafachronic acid biosynthesis. In terms of biological role, catalyzes the methyl transfer from S-adenosyl-methionine to the C-4 of the A-ring sterols such as lathosterone (5alpha-cholest-7-en-3-one) thereby rendering them unsuitable as ligand precursors. May irreversibly shunt sterols away from hormone dafachronic acid production. Dafachronic acids act as ligands and bind directly to the nuclear hormone receptor (NHR) daf-12 suppressing dauer formation and inducing reproductive growth. By reducing the biosynthesis of dafachronic acids, this methyltransferase can regulate dauer larva formation. The protein is Sterol 4-C-methyltransferase strm-1 (strm-1) of Caenorhabditis elegans.